The chain runs to 34 residues: Photosystem II reaction center protein Psb30 (34 aa).

The chain crosses the membrane as a helical span at residues 6-26 (IVAQLLSLALVTLSGPAVIFL).

Belongs to the Psb30/Ycf12 family. In terms of assembly, PSII is composed of 1 copy each of membrane proteins PsbA, PsbB, PsbC, PsbD, PsbE, PsbF, PsbH, PsbI, PsbJ, PsbK, PsbL, PsbM, PsbT, PsbX, PsbY, PsbZ, Psb30/Ycf12, peripheral proteins of the oxygen-evolving complex and a large number of cofactors. It forms dimeric complexes.

The protein localises to the plastid. Its subcellular location is the chloroplast thylakoid membrane. Its function is as follows. A core subunit of photosystem II (PSII), probably helps stabilize the reaction center. The chain is Photosystem II reaction center protein Psb30 from Emiliania huxleyi (Coccolithophore).